We begin with the raw amino-acid sequence, 318 residues long: MKFGKEFRTHLEETLPEWRDKFLCYKPLKKLLKYYPYYSADFGPANSDHNDSRPVFADTTNISSAADDGGVVPGVRPSEDLQGSFVRILNDELEKFNDFYVDKEEDFVIRLQELKERIEQVKEKNGEFASESEFSEEMMDIRRDLVTIHGEMVLLKNYSSLNFAGLVKILKKYDKRTGGLLRLPFTQLVLHQPFFTTEPLTRLVRECEANLELLFPSEAEVVESSSAVQAHSSSHQHNSPRISAETSSTLGNENLDIYKSTLAAMRAIRGLQKASSTYNPLSFSSLLQNEDDETVTAENSPNSGNKDDSEKEDTGPSH.

Positions 1–187 (MKFGKEFRTH…GGLLRLPFTQ (187 aa)) constitute an SPX domain. Low complexity predominate over residues 226–237 (SAVQAHSSSHQH). 2 disordered regions span residues 226 to 247 (SAVQAHSSSHQHNSPRISAETS) and 284 to 318 (SSLLQNEDDETVTAENSPNSGNKDDSEKEDTGPSH). Over residues 305–318 (NKDDSEKEDTGPSH) the composition is skewed to basic and acidic residues.

The protein is SPX domain-containing protein 4 (SPX4) of Arabidopsis thaliana (Mouse-ear cress).